The following is a 326-amino-acid chain: D-allose transport system permease protein AlsC (326 aa).

Topologically, residues 1-18 (MGFTTRVKSEASEKKPFN) are cytoplasmic. Residues 19-39 (FALFWDKYGTFFILAIIVAIF) traverse the membrane as a helical segment. Topologically, residues 40-70 (GSLSPEYFLTTNNITQIFVQSSVTVLIGMGE) are periplasmic. The helical transmembrane segment at 71-91 (FFAILVAGIDLSVGAILALSG) threads the bilayer. At 92–101 (MVTAKLMLAG) the chain is on the cytoplasmic side. The chain crosses the membrane as a helical span at residues 102 to 122 (VDPFLAAMIGGVLVGGALGAI). The Periplasmic portion of the chain corresponds to 123-124 (NG). Residues 125–145 (CLVNWTGLHPFIITLGTNAIF) traverse the membrane as a helical segment. At 146–149 (RGIT) the chain is on the cytoplasmic side. The chain crosses the membrane as a helical span at residues 150–170 (LVISDANSVYGFSFDFVNFFA). Residues 171–172 (AS) are Periplasmic-facing. Residues 173–193 (VIGIPVPVIFSLIVALILWFL) traverse the membrane as a helical segment. The Cytoplasmic portion of the chain corresponds to 194–221 (TTRMRLGRNIYALGGNKNSAFYSGIDVK). A helical membrane pass occupies residues 222 to 242 (FHILVVFIISGVCAGLAGVVS). Residues 243 to 252 (TARLGAAEPL) are Periplasmic-facing. The helical transmembrane segment at 253 to 273 (AGMGFETYAIASAIIGGTSFF) threads the bilayer. Over 274-278 (GGKGR) the chain is Cytoplasmic. 2 helical membrane-spanning segments follow: residues 279–299 (IFSVVIGGLIIGTINNGLNIL) and 300–320 (QVQTYYQLVVMGGLIIAAVAL). Residues 321-326 (DRLISK) lie on the Cytoplasmic side of the membrane.

The protein belongs to the binding-protein-dependent transport system permease family. AraH/RbsC subfamily.

It is found in the cell inner membrane. In terms of biological role, part of the binding-protein-dependent transport system AlsBAC for D-allose; probably responsible for the translocation of the substrate across the membrane. The protein is D-allose transport system permease protein AlsC (alsC) of Escherichia coli (strain K12).